Consider the following 641-residue polypeptide: Chaperone protein DnaK (641 aa).

Thr199 is subject to Phosphothreonine; by autocatalysis. The disordered stretch occupies residues 602–641; the sequence is MYADQADQAQQAGGQEEGQAKSADDAVDAEFEEVKDDDKK. The span at 604–615 shows a compositional bias: low complexity; the sequence is ADQADQAQQAGG. Residues 626 to 641 show a composition bias toward acidic residues; sequence DAVDAEFEEVKDDDKK.

It belongs to the heat shock protein 70 family.

Functionally, acts as a chaperone. The protein is Chaperone protein DnaK of Marinobacter nauticus (strain ATCC 700491 / DSM 11845 / VT8) (Marinobacter aquaeolei).